Reading from the N-terminus, the 1145-residue chain is Cellulose synthase-like protein D3 (1145 aa).

Residues 1–19 are compositionally biased toward polar residues; that stretch reads MASNNHFMNSRSNLSTNSD. Disordered regions lie at residues 1 to 38 and 189 to 208; these read MASN…TFAR and DNNK…SKMD. 2 consecutive transmembrane segments (helical) span residues 289–309 and 319–339; these read VISP…LFLM and AIWL…SWLL. Residue D419 is part of the active site. The residue at position 755 (S755) is a Phosphoserine. D848 is a catalytic residue. The next 6 helical transmembrane spans lie at 930–950, 956–976, 1002–1022, 1045–1065, 1079–1099, and 1109–1129; these read FFLI…QFIV, TFLV…LLEI, LAAV…SFTL, SLMI…AVGF, LIGG…FAKG, and TIVY…WVAI.

This sequence belongs to the glycosyltransferase 2 family. Plant cellulose synthase-like D subfamily. In terms of tissue distribution, preferentially expressed in root hair cells. Expressed in roots, leaves, stems, flowers and siliques.

It localises to the golgi apparatus membrane. Functionally, thought to be a Golgi-localized beta-glycan synthase that polymerize the backbones of noncellulosic polysaccharides (hemicelluloses) of plant cell wall. Required for synthesis of a cell wall polysaccharide essential for root hair elongation, but not initiation. May be the functional ortholog of rice CSLD1. The chain is Cellulose synthase-like protein D3 (CSLD3) from Arabidopsis thaliana (Mouse-ear cress).